Here is a 162-residue protein sequence, read N- to C-terminus: Peptidyl-prolyl cis-trans isomerase-like 1 (162 aa).

Residues 1 to 155 (MATDVTFDTS…DEVKILRAKV (155 aa)) form the PPIase cyclophilin-type domain.

This sequence belongs to the cyclophilin-type PPIase family. PPIL1 subfamily.

It carries out the reaction [protein]-peptidylproline (omega=180) = [protein]-peptidylproline (omega=0). In terms of biological role, PPIases accelerate the folding of proteins. It catalyzes the cis-trans isomerization of proline imidic peptide bonds in oligopeptides. The protein is Peptidyl-prolyl cis-trans isomerase-like 1 (cyp1) of Emericella nidulans (strain FGSC A4 / ATCC 38163 / CBS 112.46 / NRRL 194 / M139) (Aspergillus nidulans).